The chain runs to 550 residues: CTP synthase (550 aa).

The segment at 1-270 (MTKFVFVTGG…DRLICEELRL (270 aa)) is amidoligase domain. Residue serine 13 participates in CTP binding. A UTP-binding site is contributed by serine 13. Residues 14-19 (SLGKGI) and aspartate 71 contribute to the ATP site. Mg(2+)-binding residues include aspartate 71 and glutamate 144. CTP is bound by residues 151-153 (DIE), 191-196 (KTKPTQ), and lysine 227. UTP contacts are provided by residues 191–196 (KTKPTQ) and lysine 227. The 253-residue stretch at 295 to 547 (TIGMVGKYVD…VEAALAGQQR (253 aa)) folds into the Glutamine amidotransferase type-1 domain. Residue glycine 356 coordinates L-glutamine. The active-site Nucleophile; for glutamine hydrolysis is cysteine 383. L-glutamine contacts are provided by residues 384–387 (LGMQ), glutamate 407, and arginine 473. Catalysis depends on residues histidine 520 and glutamate 522.

It belongs to the CTP synthase family. As to quaternary structure, homotetramer.

The catalysed reaction is UTP + L-glutamine + ATP + H2O = CTP + L-glutamate + ADP + phosphate + 2 H(+). The enzyme catalyses L-glutamine + H2O = L-glutamate + NH4(+). It carries out the reaction UTP + NH4(+) + ATP = CTP + ADP + phosphate + 2 H(+). The protein operates within pyrimidine metabolism; CTP biosynthesis via de novo pathway; CTP from UDP: step 2/2. With respect to regulation, allosterically activated by GTP, when glutamine is the substrate; GTP has no effect on the reaction when ammonia is the substrate. The allosteric effector GTP functions by stabilizing the protein conformation that binds the tetrahedral intermediate(s) formed during glutamine hydrolysis. Inhibited by the product CTP, via allosteric rather than competitive inhibition. Its function is as follows. Catalyzes the ATP-dependent amination of UTP to CTP with either L-glutamine or ammonia as the source of nitrogen. Regulates intracellular CTP levels through interactions with the four ribonucleotide triphosphates. In Cupriavidus pinatubonensis (strain JMP 134 / LMG 1197) (Cupriavidus necator (strain JMP 134)), this protein is CTP synthase.